A 226-amino-acid polypeptide reads, in one-letter code: Transmembrane 4 L6 family member 20 (226 aa).

At 1-14 the chain is on the lumenal side; that stretch reads MTCCEGWTSCNGFS. Residues 15-35 traverse the membrane as a helical segment; sequence LLILILLGVVINCIPLGISLV. The Cytoplasmic segment spans residues 36 to 49; it reads EADSTSQNPISCYE. A helical membrane pass occupies residues 50–70; it reads WWFPGIIGAGLMAIPATTMSL. Over 71-83 the chain is Lumenal; it reads AARKRACCNNKTG. Residues 84–104 form a helical membrane-spanning segment; that stretch reads MFLSSLFSVITVVGAVYCMLV. Over 105–191 the chain is Cytoplasmic; that stretch reads SLQALLEGPL…RIFHFSVFMS (87 aa). The chain crosses the membrane as a helical span at residues 192–212; the sequence is LLLVGILELLFGLSQILIGFL. Residues 213 to 226 lie on the Lumenal side of the membrane; it reads GCLCGVSQRRSQIV.

It belongs to the L6 tetraspanin family. Glycosylated at Asn-132, Asn-148 and Asn-163 in presence of ceramide which inverts the orientation of TM4SF20 in membranes exposing these residues to the endoplasmic reticulum lumen. Post-translationally, cleaved by signal peptidase at Ser-14 but the peptide does not act as a signal peptide. Cleavage is inhibited by ceramide which inverts the orientation of TM4SF20 in membranes exposing the N-terminus to the cytosol and not to the endoplasmic reticulum lumen.

Its subcellular location is the membrane. The protein resides in the endoplasmic reticulum membrane. In terms of biological role, polytopic transmembrane protein. Inhibits regulated intramembrane proteolysis (RIP) of CREB3L1, inhibiting its activation and the induction of collagen synthesis. In response to ceramide, which alters TM4SF20 membrane topology, stimulates RIP activation of CREB3L1. Ceramide reverses the direction through which transmembrane helices are translocated into the endoplasmic reticulum membrane during translation of TM4SF20, this mechanism is called 'regulated alternative translocation' (RAT) and regulates the function of the transmembrane protein. The polypeptide is Transmembrane 4 L6 family member 20 (Tm4sf20) (Mus musculus (Mouse)).